A 429-amino-acid polypeptide reads, in one-letter code: Ribosomal RNA small subunit methyltransferase B (429 aa).

S-adenosyl-L-methionine contacts are provided by residues 254–260 (CAAPGGK), Asp-277, Asp-303, and Asp-322. The Nucleophile role is filled by Cys-375.

Belongs to the class I-like SAM-binding methyltransferase superfamily. RsmB/NOP family.

Its subcellular location is the cytoplasm. The enzyme catalyses cytidine(967) in 16S rRNA + S-adenosyl-L-methionine = 5-methylcytidine(967) in 16S rRNA + S-adenosyl-L-homocysteine + H(+). In terms of biological role, specifically methylates the cytosine at position 967 (m5C967) of 16S rRNA. This is Ribosomal RNA small subunit methyltransferase B from Photorhabdus laumondii subsp. laumondii (strain DSM 15139 / CIP 105565 / TT01) (Photorhabdus luminescens subsp. laumondii).